A 300-amino-acid chain; its full sequence is HTH-type transcriptional regulator ArgP (300 aa).

Positions Phe4–Thr60 constitute an HTH lysR-type domain. The segment at residues Phe21–Lys40 is a DNA-binding region (H-T-H motif).

This sequence belongs to the LysR transcriptional regulatory family. As to quaternary structure, homodimer.

In terms of biological role, controls the transcription of genes involved in arginine and lysine metabolism. The sequence is that of HTH-type transcriptional regulator ArgP from Pseudomonas aeruginosa (strain UCBPP-PA14).